Here is an 87-residue protein sequence, read N- to C-terminus: Cyclin-dependent kinases regulatory subunit 1 (87 aa).

Belongs to the CKS family. In terms of assembly, interacts with CDKA-1. Interacts with CDKB1-1, CDKB1-2 and CDKB2-1. Interacts with CYCD2-1 and At4g14310.

Functionally, associates with cyclin-dependent kinases (CDKs) and plays an essential role in the regulation of the cell cycle that affects plant growth rate. May inhibit both the G1/S and G2/M phases. This chain is Cyclin-dependent kinases regulatory subunit 1 (CKS1), found in Arabidopsis thaliana (Mouse-ear cress).